The chain runs to 332 residues: Divalent cation transporter CmaX (332 aa).

Topologically, residues 1 to 277 (MQAYESGDER…MNRTMYLLGI (277 aa)) are cytoplasmic. Residues 278 to 286 (ITGFFLPMS) form a helical membrane-spanning segment. At 287-307 (FVTGLLGINVGGIPGADAPHG) the chain is on the periplasmic side. A helical transmembrane segment spans residues 308 to 323 (FWLACLLIGGVATFQW). Over 324–332 (WVFRRLRWL) the chain is Cytoplasmic.

The protein belongs to the CorA metal ion transporter (MIT) (TC 1.A.35) family. As to quaternary structure, homopentamer.

The protein resides in the cell inner membrane. The catalysed reaction is Zn(2+)(in) = Zn(2+)(out). It catalyses the reaction Cd(2+)(in) = Cd(2+)(out). It carries out the reaction Ni(2+)(in) = Ni(2+)(out). The enzyme catalyses Co(2+)(in) = Co(2+)(out). Functionally, transports divalent cations including Zn(2+), Cd(2+), Ni(2+) and Co(2+). The proton gradient has a small influence on transport suggesting that the transport is probably not proton-dependent. The polypeptide is Divalent cation transporter CmaX (Pseudomonas aeruginosa (strain ATCC 15692 / DSM 22644 / CIP 104116 / JCM 14847 / LMG 12228 / 1C / PRS 101 / PAO1)).